The chain runs to 624 residues: MACNILNFLTGLLSLSSTLPSTYFPSCIKPSNSHVSQNPVRFEVHLTPGRANPTGAGFRDVILVNGTFTGPTLRLSRGDNVEFLVRNHLREDTAVHFHGITQSLSPWADGTPGIAQRPIRPGAAYLYRWRADESGVFFYHAHSRGQLMDGMYGAIVIERGEDEPSPFHMISHEASDWELMREAEREVQTLMISDWSQFSFGEVMGVEREANIDFTCMDAIVVNGAGSEYCLERELLNEYTNPLVKFILSHTDEKEITDKGCVPPLRLFQGNYSLHLDTLPPEAFRKCIPGVGGGANHTVTVHSSNRWAALTFINPGGLYPLKVTIDNHPMHVFAVDGHYIYPQIVDQILVNNGERYSVFVKLDQEVGRYTIRIANDLLGQVLGGFAALSYNGVMDDPPHPKPLMNYAGGSLVKNIRVFDEFNTRPYPPKPPASVADRTHKFMVRKLAQPHGAYEWTMSGIEGLNMTTEDVASPFLFQDPSQIETSELMLTTKKNEWVDLIIEVEGPFAQSHPMHKHGNKAFIVGRGVGFFPWATVEEAEKHLPRGTFNFIDPPYKDTFKTLEGVNNNAWLALRYHANSPGAWLFHCHIQTHLAGGMGVVILDGVDEWPELPEAYAEWNGFEAPV.

Residues 1–18 (MACNILNFLTGLLSLSST) form the signal peptide. Plastocyanin-like domains lie at 48–160 (PGRA…IERG) and 216–373 (CMDA…TIRI). Residue Asn65 is glycosylated (N-linked (GlcNAc...) asparagine). His96, His98, His140, and His142 together coordinate Cu cation. 3 N-linked (GlcNAc...) asparagine glycosylation sites follow: Asn271, Asn296, and Asn464. Residues 474-603 (FLFQDPSQIE…GGMGVVILDG (130 aa)) form the Plastocyanin-like 3 domain. Cu cation is bound by residues His511, His514, His516, His585, Cys586, His587, and His591.

This sequence belongs to the multicopper oxidase family.

It participates in secondary metabolite biosynthesis. Multicopper oxidase; part of the gene cluster that mediates the biosynthesis of elsinochrome C, a perelyenequinone phytotoxin structurally similar to cercosporin. The first step of elsinochrome C biosynthesis is performed by the polyketide synthase elcA which catalyzes the formation of nor-toralactone. The starter unit acyltransferase (SAT) domain of elcA initiates polyketide extension by the selective utilization of acetyl-CoA, which is elongated to the heptaketide in the beta-ketoacyl synthase (KS) domain by successive condensations with six malonyl units introduced by the malonyl acyltransferase (MAT) domain. The product template (PT) domain catalyzes C4-C9 and C2-C11 aldol cyclizations and dehydrations to a trihydroxynaphthalene, which is thought to be delivered to the thioesterase (TE) domain for product release. The bifunctional enzyme elcB then methylates nor-toralactone to toralactone before conducting an unusual oxidative aromatic ring opening. The next step in perylenequinone biosynthesis is an O-methylation at the nascent OH-6 of the elcB product performed by the O-methyltransferase elcD. The oxidative coupling of the two monomeric naphthol units in perylenequinone biosynthesis is catalyzed by the FAD-dependent monooxygenase elcE and the multicopper oxidase elcG. ElcG might catalyze the first intermolecular coupling in a regio- and stereo-selective manner via a phenol radical coupling mechanism and the elcE could forge the second C-C bond intramolecularly via a hydride transfer mechanism. The fasciclin domain-containing protein elcF might also play a role duting this step. The last piece of the puzzle in the biosynthesis of elsinochrome C is the additional annulation by enolate coupling to afford the dihydrobenzo(ghi)perylenequinone system, catalyzed by the FAD-dependent monooxygenase elcH. The polypeptide is Multicopper oxidase elcG (Phaeosphaeria nodorum (strain SN15 / ATCC MYA-4574 / FGSC 10173) (Glume blotch fungus)).